The primary structure comprises 429 residues: Adenylosuccinate synthetase (429 aa).

GTP is bound by residues 12–18 (GDEGKGK) and 40–42 (GHT). The active-site Proton acceptor is the D13. Residues D13 and G40 each contribute to the Mg(2+) site. IMP is bound by residues 13 to 16 (DEGK), 38 to 41 (NAGH), T129, R143, Q224, T239, and R303. Residue H41 is the Proton donor of the active site. Residue 299–305 (VTTGRAR) participates in substrate binding. GTP-binding positions include R305, 331 to 333 (KLD), and 413 to 415 (GVG).

It belongs to the adenylosuccinate synthetase family. Homodimer. Mg(2+) is required as a cofactor.

The protein resides in the cytoplasm. It catalyses the reaction IMP + L-aspartate + GTP = N(6)-(1,2-dicarboxyethyl)-AMP + GDP + phosphate + 2 H(+). It participates in purine metabolism; AMP biosynthesis via de novo pathway; AMP from IMP: step 1/2. Functionally, plays an important role in the de novo pathway of purine nucleotide biosynthesis. Catalyzes the first committed step in the biosynthesis of AMP from IMP. The polypeptide is Adenylosuccinate synthetase (Rhodococcus jostii (strain RHA1)).